Consider the following 81-residue polypeptide: Large ribosomal subunit protein bL31B (81 aa).

It belongs to the bacterial ribosomal protein bL31 family. Type B subfamily. Part of the 50S ribosomal subunit.

The protein is Large ribosomal subunit protein bL31B of Borreliella burgdorferi (strain ATCC 35210 / DSM 4680 / CIP 102532 / B31) (Borrelia burgdorferi).